The following is a 300-amino-acid chain: Protoheme IX farnesyltransferase (300 aa).

The next 8 helical transmembrane spans lie at 24–44, 46–66, 94–114, 118–138, 146–166, 172–192, 224–244, and 278–298; these read VTQL…PGMV, WHVL…AFAI, PQIL…LYTF, LTMW…TLLL, IVIG…AVTG, AWIL…VLAL, VILF…VVYL, and IVYL…RPLL.

The protein belongs to the UbiA prenyltransferase family. Protoheme IX farnesyltransferase subfamily.

The protein localises to the cell inner membrane. It carries out the reaction heme b + (2E,6E)-farnesyl diphosphate + H2O = Fe(II)-heme o + diphosphate. It functions in the pathway porphyrin-containing compound metabolism; heme O biosynthesis; heme O from protoheme: step 1/1. Converts heme B (protoheme IX) to heme O by substitution of the vinyl group on carbon 2 of heme B porphyrin ring with a hydroxyethyl farnesyl side group. The polypeptide is Protoheme IX farnesyltransferase (Burkholderia ambifaria (strain ATCC BAA-244 / DSM 16087 / CCUG 44356 / LMG 19182 / AMMD) (Burkholderia cepacia (strain AMMD))).